We begin with the raw amino-acid sequence, 112 residues long: ATP synthase epsilon chain (112 aa).

It belongs to the ATPase epsilon chain family. F-type ATPases have 2 components, CF(1) - the catalytic core - and CF(0) - the membrane proton channel. CF(1) has five subunits: alpha(3), beta(3), gamma(1), delta(1), epsilon(1). CF(0) has three main subunits: a, b and c.

Its subcellular location is the cell inner membrane. In terms of biological role, produces ATP from ADP in the presence of a proton gradient across the membrane. The chain is ATP synthase epsilon chain from Rickettsia rickettsii (strain Sheila Smith).